A 459-amino-acid polypeptide reads, in one-letter code: tRNA modification GTPase MnmE (459 aa).

(6S)-5-formyl-5,6,7,8-tetrahydrofolate is bound by residues arginine 22, glutamate 85, and arginine 124. The TrmE-type G domain maps to 221–380 (GLSTVIVGKP…LEIQIRDLFF (160 aa)). Residue asparagine 231 coordinates K(+). GTP-binding positions include 231–236 (NVGKSS), 250–256 (TEVAGTT), and 275–278 (DTAG). Serine 235 contributes to the Mg(2+) binding site. 3 residues coordinate K(+): threonine 250, valine 252, and threonine 255. Threonine 256 is a binding site for Mg(2+). Lysine 459 is a binding site for (6S)-5-formyl-5,6,7,8-tetrahydrofolate.

Belongs to the TRAFAC class TrmE-Era-EngA-EngB-Septin-like GTPase superfamily. TrmE GTPase family. In terms of assembly, homodimer. Heterotetramer of two MnmE and two MnmG subunits. K(+) is required as a cofactor.

The protein resides in the cytoplasm. In terms of biological role, exhibits a very high intrinsic GTPase hydrolysis rate. Involved in the addition of a carboxymethylaminomethyl (cmnm) group at the wobble position (U34) of certain tRNAs, forming tRNA-cmnm(5)s(2)U34. This Staphylococcus aureus (strain MW2) protein is tRNA modification GTPase MnmE.